Consider the following 31-residue polypeptide: Ice-structuring glycoprotein 3 (31 aa).

Residues T3, T6, T9, T12, T15, T18, T21, T24, T27, and T30 are each glycosylated (O-linked (GalNAc...) threonine).

In terms of processing, O-linked glycans consist of Gal-GalNAc disaccharides. The three proteins may differ only in the number of repeating units of -Ala-Ala-Thr-.

The protein resides in the secreted. Its function is as follows. Antifreeze proteins lower the blood freezing point. This fish lives in antarctic waters where it experiences water temperatures near -1.9 degrees Celsius. Its blood has a freezing point of about -2.0 degrees Celsius, and 30% of the freezing-point depression is due mainly to the 3 major high molecular weight glycoproteins in the plasma. This is Ice-structuring glycoprotein 3 from Pagothenia borchgrevinki (Bald rockcod).